A 364-amino-acid polypeptide reads, in one-letter code: MSQQAVKFAYWVPNVSGGLVVSRIEQRTDWGIDYNRKLAQLAEAAGFEYALTQIRFTAGYGAEFQHESVAFSHALLAATSQLKVIAAILPGPWQPALAAKQLATIDQLTNGRIAVNIVSGWFRGEFQAIGEHWLEHDERYRRSEEFIRSLRGIWSQDNFTFRGDFYRFDNYSLKPKPLGRPEIFQGGSSRAARDMAARVSDWYFTNGNSVEGIKAQVDDIRAKAAANHHSVKIGVNAFVIARDTEEEAKAVLAQIIDQADPEAVNAFGDAAKQAGRASPEGEGNWAKSTFEDLVQYNDGFKTNLIGTPQQIAERIVALKAVGVDLVLAGFLHFQEEVEYFGQRVLPLVRELEAKAQSARTAEVA.

This sequence belongs to the SsuD family.

It carries out the reaction dimethyl sulfone + FMNH2 + O2 = methanesulfinate + FMN + formaldehyde + H2O + 2 H(+). Its function is as follows. Involved in the dimethyl sulfide degradation pathway. Catalyzes the oxidation of dimethylsulfone (DMSO2) to yield methanesulfinate, which is oxidized spontaneously to methanesulfonate in the presence of dioxygen and FMNH(2). This chain is FMNH(2)-dependent dimethylsulfone monooxygenase, found in Pseudomonas fluorescens (strain Pf0-1).